The primary structure comprises 1441 residues: Actin cytoskeleton-regulatory complex protein PAN1 (1441 aa).

The segment covering methionine 1–asparagine 23 has biased composition (polar residues). The disordered stretch occupies residues methionine 1–phenylalanine 150. Low complexity predominate over residues glutamine 24–glycine 38. Composition is skewed to polar residues over residues glycine 46–threonine 58 and proline 66–valine 87. The span at methionine 97 to alanine 137 shows a compositional bias: low complexity. Positions aspartate 188–methionine 277 constitute an EH 1 domain. The EF-hand 1 domain maps to leucine 221–lysine 256. A compositionally biased stretch (polar residues) spans alanine 292–threonine 303. Residues alanine 292–asparagine 316 form a disordered region. The region spanning glutamate 440 to asparagine 529 is the EH 2 domain. The region spanning leucine 473–lysine 508 is the EF-hand 2 domain. Residues glycine 594–leucine 622 are disordered. Residues glycine 604–glutamate 621 show a composition bias toward polar residues. 2 coiled-coil regions span residues serine 618 to alanine 735 and lysine 791 to glutamate 820. 2 disordered regions span residues glycine 824 to tryptophan 845 and arginine 867 to aspartate 1441. The segment covering alanine 891–proline 911 has biased composition (low complexity). Coiled-coil stretches lie at residues glutamate 956 to alanine 997 and arginine 1028 to aspartate 1143. Basic and acidic residues predominate over residues arginine 961 to glutamate 993. The segment covering glutamate 994–lysine 1008 has biased composition (low complexity). Composition is skewed to basic and acidic residues over residues proline 1023–lysine 1098 and glutamate 1107–glutamate 1137. Residues leucine 1139–proline 1152 show a composition bias toward acidic residues. Over residues isoleucine 1155–glycine 1166 the composition is skewed to polar residues. Pro residues-rich tracts occupy residues proline 1177–serine 1189 and proline 1219–proline 1236. Basic and acidic residues predominate over residues lysine 1262–aspartate 1272. Acidic residues predominate over residues lysine 1273–aspartate 1282. A compositionally biased stretch (low complexity) spans serine 1313–valine 1324. Residues proline 1340–alanine 1402 are compositionally biased toward pro residues.

Belongs to the PAN1 family. Component of the PAN1 actin cytoskeleton-regulatory complex.

It is found in the cell membrane. Its subcellular location is the endosome membrane. The protein resides in the cytoplasm. It localises to the cytoskeleton. The protein localises to the actin patch. Functionally, component of the PAN1 actin cytoskeleton-regulatory complex required for the internalization of endosomes during actin-coupled endocytosis. The complex links the site of endocytosis to the cell membrane-associated actin cytoskeleton. Mediates uptake of external molecules and vacuolar degradation of plasma membrane proteins. Plays a role in the proper organization of the cell membrane-associated actin cytoskeleton and promotes its destabilization. The sequence is that of Actin cytoskeleton-regulatory complex protein PAN1 (PAN1) from Podospora anserina (strain S / ATCC MYA-4624 / DSM 980 / FGSC 10383) (Pleurage anserina).